The sequence spans 219 residues: Putative GEM-like protein 8 (219 aa).

Positions 96–174 (KIYKRLFKVS…CKINGVNQSQ (79 aa)) constitute a GRAM domain.

This sequence belongs to the GEM family.

The chain is Putative GEM-like protein 8 from Arabidopsis thaliana (Mouse-ear cress).